A 308-amino-acid chain; its full sequence is Neurexophilin-4 (308 aa).

The first 23 residues, M1 to A23, serve as a signal peptide directing secretion. The tract at residues Q24–G84 is II. Residues A40 to P51 are compositionally biased toward low complexity. Residues A40–L59 form a disordered region. Residues N72, N133, N143, and N149 are each glycosylated (N-linked (GlcNAc...) asparagine). The segment at A85 to F163 is III. The tract at residues G164–G224 is IV (linker domain). The interval A225 to G308 is v (Cys-rich).

This sequence belongs to the neurexophilin family. Post-translationally, may be proteolytically processed at the boundary between the N-terminal non-conserved and the central conserved domain in neuron-like cells. Expressed in brain, spleen, and testis.

Its subcellular location is the secreted. May be signaling molecules that resemble neuropeptides and that act by binding to alpha-neurexins and possibly other receptors. The polypeptide is Neurexophilin-4 (NXPH4) (Homo sapiens (Human)).